The chain runs to 482 residues: UDP-N-acetylmuramoyl-L-alanyl-D-glutamate--2,6-diaminopimelate ligase 1 (482 aa).

Ser30 is a binding site for UDP-N-acetyl-alpha-D-muramoyl-L-alanyl-D-glutamate. Residue 110–116 (GTNGKTT) coordinates ATP. UDP-N-acetyl-alpha-D-muramoyl-L-alanyl-D-glutamate-binding positions include 152–153 (TT), Ser179, and Arg187. Position 219 is an N6-carboxylysine (Lys219). Meso-2,6-diaminopimelate is bound by residues Arg378, 402-405 (DNPR), Gly452, and Glu456. The Meso-diaminopimelate recognition motif motif lies at 402-405 (DNPR).

This sequence belongs to the MurCDEF family. MurE subfamily. It depends on Mg(2+) as a cofactor. Carboxylation is probably crucial for Mg(2+) binding and, consequently, for the gamma-phosphate positioning of ATP.

The protein resides in the cytoplasm. It carries out the reaction UDP-N-acetyl-alpha-D-muramoyl-L-alanyl-D-glutamate + meso-2,6-diaminopimelate + ATP = UDP-N-acetyl-alpha-D-muramoyl-L-alanyl-gamma-D-glutamyl-meso-2,6-diaminopimelate + ADP + phosphate + H(+). It functions in the pathway cell wall biogenesis; peptidoglycan biosynthesis. Catalyzes the addition of meso-diaminopimelic acid to the nucleotide precursor UDP-N-acetylmuramoyl-L-alanyl-D-glutamate (UMAG) in the biosynthesis of bacterial cell-wall peptidoglycan. In Clostridium acetobutylicum (strain ATCC 824 / DSM 792 / JCM 1419 / IAM 19013 / LMG 5710 / NBRC 13948 / NRRL B-527 / VKM B-1787 / 2291 / W), this protein is UDP-N-acetylmuramoyl-L-alanyl-D-glutamate--2,6-diaminopimelate ligase 1.